Reading from the N-terminus, the 598-residue chain is Elongation factor 4 (598 aa).

The tr-type G domain maps to Q2–K184. Residues D14 to T19 and N131 to D134 each bind GTP.

Belongs to the TRAFAC class translation factor GTPase superfamily. Classic translation factor GTPase family. LepA subfamily.

It is found in the cell inner membrane. The enzyme catalyses GTP + H2O = GDP + phosphate + H(+). In terms of biological role, required for accurate and efficient protein synthesis under certain stress conditions. May act as a fidelity factor of the translation reaction, by catalyzing a one-codon backward translocation of tRNAs on improperly translocated ribosomes. Back-translocation proceeds from a post-translocation (POST) complex to a pre-translocation (PRE) complex, thus giving elongation factor G a second chance to translocate the tRNAs correctly. Binds to ribosomes in a GTP-dependent manner. The polypeptide is Elongation factor 4 (Aromatoleum aromaticum (strain DSM 19018 / LMG 30748 / EbN1) (Azoarcus sp. (strain EbN1))).